A 130-amino-acid polypeptide reads, in one-letter code: Protein NrdI (130 aa).

The protein belongs to the NrdI family.

Probably involved in ribonucleotide reductase function. The chain is Protein NrdI from Staphylococcus carnosus (strain TM300).